The primary structure comprises 431 residues: Glutamate-1-semialdehyde 2,1-aminomutase (431 aa).

At Lys-269 the chain carries N6-(pyridoxal phosphate)lysine.

Belongs to the class-III pyridoxal-phosphate-dependent aminotransferase family. HemL subfamily. In terms of assembly, homodimer. It depends on pyridoxal 5'-phosphate as a cofactor.

It localises to the cytoplasm. It catalyses the reaction (S)-4-amino-5-oxopentanoate = 5-aminolevulinate. Its pathway is porphyrin-containing compound metabolism; protoporphyrin-IX biosynthesis; 5-aminolevulinate from L-glutamyl-tRNA(Glu): step 2/2. The polypeptide is Glutamate-1-semialdehyde 2,1-aminomutase (Francisella tularensis subsp. holarctica (strain FTNF002-00 / FTA)).